The following is a 300-amino-acid chain: Formamidopyrimidine-DNA glycosylase (300 aa).

Residue Pro2 is the Schiff-base intermediate with DNA of the active site. The Proton donor role is filled by Glu3. The active-site Proton donor; for beta-elimination activity is the Lys60. Residues His108, Arg136, and Arg181 each contribute to the DNA site. Residues 266–300 form an FPG-type zinc finger; sequence WVYSRAGQPCRICNTPLEKIKLAGRSTHFCPQCQK. Residue Arg290 is the Proton donor; for delta-elimination activity of the active site.

The protein belongs to the FPG family. As to quaternary structure, monomer. Zn(2+) is required as a cofactor.

It carries out the reaction Hydrolysis of DNA containing ring-opened 7-methylguanine residues, releasing 2,6-diamino-4-hydroxy-5-(N-methyl)formamidopyrimidine.. The enzyme catalyses 2'-deoxyribonucleotide-(2'-deoxyribose 5'-phosphate)-2'-deoxyribonucleotide-DNA = a 3'-end 2'-deoxyribonucleotide-(2,3-dehydro-2,3-deoxyribose 5'-phosphate)-DNA + a 5'-end 5'-phospho-2'-deoxyribonucleoside-DNA + H(+). Involved in base excision repair of DNA damaged by oxidation or by mutagenic agents. Acts as a DNA glycosylase that recognizes and removes damaged bases. Has a preference for oxidized purines, such as 7,8-dihydro-8-oxoguanine (8-oxoG). Has AP (apurinic/apyrimidinic) lyase activity and introduces nicks in the DNA strand. Cleaves the DNA backbone by beta-delta elimination to generate a single-strand break at the site of the removed base with both 3'- and 5'-phosphates. This chain is Formamidopyrimidine-DNA glycosylase, found in Trichodesmium erythraeum (strain IMS101).